Reading from the N-terminus, the 266-residue chain is Hydroxyethylthiazole kinase (266 aa).

Met-45 contacts substrate. Lys-121 and Ser-167 together coordinate ATP. Position 194 (Gly-194) interacts with substrate.

The protein belongs to the Thz kinase family. Mg(2+) is required as a cofactor.

The catalysed reaction is 5-(2-hydroxyethyl)-4-methylthiazole + ATP = 4-methyl-5-(2-phosphooxyethyl)-thiazole + ADP + H(+). It participates in cofactor biosynthesis; thiamine diphosphate biosynthesis; 4-methyl-5-(2-phosphoethyl)-thiazole from 5-(2-hydroxyethyl)-4-methylthiazole: step 1/1. Catalyzes the phosphorylation of the hydroxyl group of 4-methyl-5-beta-hydroxyethylthiazole (THZ). This Methanocella arvoryzae (strain DSM 22066 / NBRC 105507 / MRE50) protein is Hydroxyethylthiazole kinase.